The sequence spans 337 residues: Neurogenic differentiation factor 6 (337 aa).

The segment at 28–80 (QKQIKKPESFPKQVVLRGKSIKRAPGEETEKEEEEEDREEEDENGLSRRRGLR) is disordered. Positions 54 to 71 (EETEKEEEEEDREEEDEN) are enriched in acidic residues. The Nuclear localization signal signature appears at 80–86 (RKKKTTK). Positions 94 to 146 (FRRQEANARERNRMHGLNDALDNLRKVVPCYSKTQKLSKIETLRLAKNYIWAL) constitute a bHLH domain.

As to quaternary structure, efficient DNA binding requires dimerization with another bHLH protein. As to expression, specific to the nervous system of both embryos and adults. Highest levels in the cortical plate of the cerebrum.

It localises to the nucleus. Activates E box-dependent transcription in collaboration with TCF3/E47. May be a trans-acting factor involved in the development and maintenance of the mammalian nervous system. Transactivates the promoter of its own gene. This Mus musculus (Mouse) protein is Neurogenic differentiation factor 6 (Neurod6).